The following is a 132-amino-acid chain: Small ribosomal subunit protein uS8c (132 aa).

It belongs to the universal ribosomal protein uS8 family. Part of the 30S ribosomal subunit.

The protein resides in the plastid. Its subcellular location is the chloroplast. In terms of biological role, one of the primary rRNA binding proteins, it binds directly to 16S rRNA central domain where it helps coordinate assembly of the platform of the 30S subunit. This is Small ribosomal subunit protein uS8c (rps8) from Staurastrum punctulatum (Green alga).